The following is a 211-amino-acid chain: GTP-binding protein ypt5 (211 aa).

21 to 28 (GDSAVGKS) provides a ligand contact to GTP. An Effector region motif is present at residues 43 to 51 (RESTIGAAF). GTP contacts are provided by residues 70–74 (DTAGQ) and 128–131 (NKLD). S-geranylgeranyl cysteine attachment occurs at residues Cys209 and Cys211. Residue Cys211 is modified to Cysteine methyl ester.

Belongs to the small GTPase superfamily. Rab family.

The protein resides in the cell membrane. In terms of biological role, protein transport. Probably involved in vesicular traffic. The sequence is that of GTP-binding protein ypt5 (ypt5) from Schizosaccharomyces pombe (strain 972 / ATCC 24843) (Fission yeast).